The sequence spans 693 residues: CREB-regulated transcription coactivator 2 (693 aa).

The span at 1 to 20 (MATSGANGPGSATASASNPR) shows a compositional bias: polar residues. The segment at 1–30 (MATSGANGPGSATASASNPRKFSEKIALQK) is disordered. N-acetylalanine is present on Ala-2. Arg-51 carries the asymmetric dimethylarginine; by PRMT6 modification. Residues Ser-70, Ser-86, and Ser-90 each carry the phosphoserine modification. Arg-99, Arg-120, and Arg-123 each carry asymmetric dimethylarginine; by PRMT6. At Ser-136 the chain carries Phosphoserine. An asymmetric dimethylarginine; by PRMT6 mark is found at Arg-161 and Arg-168. A Phosphothreonine modification is found at Thr-169. Ser-171 is subject to Phosphoserine. Residues 174 to 188 (ALHTSVMNPSPQDTY) show a composition bias toward polar residues. Residues 174–210 (ALHTSVMNPSPQDTYPSPAAPSVLPSRRGGCLDGETD) are disordered. The segment at 209–215 (TDSKVPA) is required for interaction with COP1. Residue Lys-234 forms a Glycyl lysine isopeptide (Lys-Gly) (interchain with G-Cter in SUMO2) linkage. The Nuclear export signal motif lies at 271 to 287 (TGGSLPDLTNLHFPPPL). Disordered stretches follow at residues 271–307 (TGGSLPDLTNLHFPPPLPTPLDPEETAYPSLSGGSST), 335–463 (HSPL…SPTL), and 476–548 (KLPT…QSYH). Position 274 is a phosphoserine; by MARK2 (Ser-274). Residue Ser-306 is modified to Phosphoserine. Residues 339–351 (SHPSFQSSLSNPN) are compositionally biased toward polar residues. 2 stretches are compositionally biased toward low complexity: residues 352 to 378 (LQASLSSPQPQLQGSHSHPSLPASSLA) and 386 to 424 (SLGHPSLSAPALSSSSSSSSASSPVLGAPAYPASAPGAS). Ser-368, Ser-393, Ser-433, and Ser-456 each carry phosphoserine. Positions 447–463 (SQQQLPKQFSPTMSPTL) are enriched in polar residues. Tyr-488 is subject to Phosphotyrosine. A phosphoserine mark is found at Ser-489 and Ser-492. Position 501 is a phosphothreonine (Thr-501). 2 positions are modified to phosphoserine: Ser-613 and Ser-624.

Belongs to the TORC family. Binds, as a tetramer, through its N-terminal region, with the bZIP domain of CREB1. 'Arg-314' in the bZIP domain of CREB1 is essential for this interaction. Interaction, via its C-terminal, with TAF4, enhances recruitment of TAF4 to CREB1. Interacts with SIK2. Interacts with 14-3-3 proteins, YWHAB and YWHAG. Interacts (probably when phosphorylated at Ser-171) with YWHAE. Interacts with calmodulin-dependent catalytic subunit PPP3CA/calcineurin A. Interaction with COP1 mediates nuclear export and degradation of CRTC2. Phosphorylation/dephosphorylation states of Ser-171 are required for regulating transduction of CREB activity. CRTCs/TORCs are inactive when phosphorylated, and active when dephosphorylated at this site. This primary site of phosphorylation, is regulated by cAMP and calcium levels and is dependent on the phosphorylation of SIKs (SIK1 and SIK2) by LKB1. Following adenylyl cyclase activation, dephosphorylated at Ser-171 by PPP3CA/calcineurin A resulting in CRTC2 dissociation from 14-3-3 proteins and PPP3CA. Both insulin and AMPK increase this phosphorylation of CRTC2 while glucagon suppresses it. Phosphorylation at Ser-274 by MARK2 is induced under low glucose conditions and dephosphorylated in response to glucose influx. Phosphorylation at Ser-274 promotes interaction with 14-3-3 proteins and translocation to the cytoplasm. Post-translationally, asymmetric dimethylation of arginine resisues by PRMT6 enhances the association of CRTC2 with CREB on the promoters of gluconeogenic genes.

The protein localises to the cytoplasm. Its subcellular location is the nucleus. In terms of biological role, transcriptional coactivator for CREB1 which activates transcription through both consensus and variant cAMP response element (CRE) sites. Acts as a coactivator, in the SIK/TORC signaling pathway, being active when dephosphorylated and acts independently of CREB1 'Ser-133' phosphorylation. Enhances the interaction of CREB1 with TAF4. Regulates gluconeogenesis as a component of the LKB1/AMPK/TORC2 signaling pathway. Regulates the expression of specific genes such as the steroidogenic gene, StAR. Potent coactivator of PPARGC1A and inducer of mitochondrial biogenesis in muscle cells. This Bos taurus (Bovine) protein is CREB-regulated transcription coactivator 2 (CRTC2).